Reading from the N-terminus, the 392-residue chain is Putative glutamate--cysteine ligase 2 (392 aa).

The segment at 347–367 (AARKHGAAPEPGTRTRGDDGV) is disordered.

The protein belongs to the glutamate--cysteine ligase type 2 family. YbdK subfamily.

The enzyme catalyses L-cysteine + L-glutamate + ATP = gamma-L-glutamyl-L-cysteine + ADP + phosphate + H(+). Its function is as follows. ATP-dependent carboxylate-amine ligase which exhibits weak glutamate--cysteine ligase activity. In Corynebacterium jeikeium (strain K411), this protein is Putative glutamate--cysteine ligase 2.